The chain runs to 130 residues: MTADLPDFVPDFEKTGGLVPAIAQDAVSGEVLMMAWMNEEAWHRTLTTGEAHYFSRSRGSLWHKGGTSGHTQHIRAVRLDCDSDTILLLVDQIGGAACHKGYKSCFFRELKDGEISVCSPLVFDPEEVYK.

Asp80 is a binding site for Mg(2+). Cys81 provides a ligand contact to Zn(2+). Mg(2+)-binding residues include Asp82 and Asp84. 2 residues coordinate Zn(2+): Cys98 and Cys105.

The protein belongs to the PRA-CH family. Homodimer. Mg(2+) is required as a cofactor. Zn(2+) serves as cofactor.

It is found in the cytoplasm. It catalyses the reaction 1-(5-phospho-beta-D-ribosyl)-5'-AMP + H2O = 1-(5-phospho-beta-D-ribosyl)-5-[(5-phospho-beta-D-ribosylamino)methylideneamino]imidazole-4-carboxamide. It participates in amino-acid biosynthesis; L-histidine biosynthesis; L-histidine from 5-phospho-alpha-D-ribose 1-diphosphate: step 3/9. Catalyzes the hydrolysis of the adenine ring of phosphoribosyl-AMP. The polypeptide is Phosphoribosyl-AMP cyclohydrolase (Oleidesulfovibrio alaskensis (strain ATCC BAA-1058 / DSM 17464 / G20) (Desulfovibrio alaskensis)).